The chain runs to 108 residues: UPF0060 membrane protein RSKD131_0092 (108 aa).

4 consecutive transmembrane segments (helical) span residues 5-25, 32-52, 62-82, and 86-106; these read LAAYAGAALAEIAGCFAVWAW, ALWLVPGALSLGAFAWLLALT, AVYGGIYVAASLLWLWAVEGV, and RWDMGGAALVLAGAAVILWAP.

Belongs to the UPF0060 family.

It is found in the cell inner membrane. This is UPF0060 membrane protein RSKD131_0092 from Cereibacter sphaeroides (strain KD131 / KCTC 12085) (Rhodobacter sphaeroides).